The primary structure comprises 210 residues: Cytochrome c biogenesis ATP-binding export protein CcmA (210 aa).

The ABC transporter domain occupies 3–205 (LHLQAAGLAC…KPSGYRELNL (203 aa)). Residue 37–44 (GPNGSGKT) participates in ATP binding.

This sequence belongs to the ABC transporter superfamily. CcmA exporter (TC 3.A.1.107) family. As to quaternary structure, the complex is composed of two ATP-binding proteins (CcmA) and two transmembrane proteins (CcmB).

The protein resides in the cell inner membrane. The enzyme catalyses heme b(in) + ATP + H2O = heme b(out) + ADP + phosphate + H(+). Part of the ABC transporter complex CcmAB involved in the biogenesis of c-type cytochromes; once thought to export heme, this seems not to be the case, but its exact role is uncertain. Responsible for energy coupling to the transport system. In Pseudomonas putida (strain GB-1), this protein is Cytochrome c biogenesis ATP-binding export protein CcmA.